We begin with the raw amino-acid sequence, 134 residues long: Homeobox protein ceh-5 (134 aa).

The homeobox DNA-binding region spans 35 to 94 (PKRPRTVFTDEQLEKLEESFNTSGYLSGSTRAKLAESLGLSDNQVKVWFQNRRTKQKKID).

It localises to the nucleus. The polypeptide is Homeobox protein ceh-5 (ceh-5) (Caenorhabditis elegans).